The following is a 1207-amino-acid chain: DNA-directed RNA polymerase subunit beta' (1207 aa).

Residues C60, C62, C75, and C78 each coordinate Zn(2+). Mg(2+) is bound by residues D450, D452, and D454. Zn(2+) is bound by residues C819, C893, C900, and C903.

This sequence belongs to the RNA polymerase beta' chain family. The RNAP catalytic core consists of 2 alpha, 1 beta, 1 beta' and 1 omega subunit. When a sigma factor is associated with the core the holoenzyme is formed, which can initiate transcription. It depends on Mg(2+) as a cofactor. The cofactor is Zn(2+).

It carries out the reaction RNA(n) + a ribonucleoside 5'-triphosphate = RNA(n+1) + diphosphate. Functionally, DNA-dependent RNA polymerase catalyzes the transcription of DNA into RNA using the four ribonucleoside triphosphates as substrates. This chain is DNA-directed RNA polymerase subunit beta', found in Streptococcus pyogenes serotype M3 (strain SSI-1).